A 550-amino-acid polypeptide reads, in one-letter code: CTP synthase (550 aa).

The segment at 1–266 (MNVNYIFVTG…DEYICKYFNL (266 aa)) is amidoligase domain. A CTP-binding site is contributed by S14. Residue S14 coordinates UTP. Residues 15 to 20 (SLGKGI) and D72 each bind ATP. The Mg(2+) site is built by D72 and E140. CTP contacts are provided by residues 147–149 (DIE), 187–192 (KTKPTQ), and K223. UTP-binding positions include 187-192 (KTKPTQ) and K223. The 256-residue stretch at 291-546 (TIGIVGKYIR…INAAIQYQCK (256 aa)) folds into the Glutamine amidotransferase type-1 domain. G353 lines the L-glutamine pocket. C380 functions as the Nucleophile; for glutamine hydrolysis in the catalytic mechanism. Residues 381 to 384 (LGMQ), E404, and R474 each bind L-glutamine. Active-site residues include H519 and E521.

Belongs to the CTP synthase family. Homotetramer.

The catalysed reaction is UTP + L-glutamine + ATP + H2O = CTP + L-glutamate + ADP + phosphate + 2 H(+). The enzyme catalyses L-glutamine + H2O = L-glutamate + NH4(+). It catalyses the reaction UTP + NH4(+) + ATP = CTP + ADP + phosphate + 2 H(+). Its pathway is pyrimidine metabolism; CTP biosynthesis via de novo pathway; CTP from UDP: step 2/2. With respect to regulation, allosterically activated by GTP, when glutamine is the substrate; GTP has no effect on the reaction when ammonia is the substrate. The allosteric effector GTP functions by stabilizing the protein conformation that binds the tetrahedral intermediate(s) formed during glutamine hydrolysis. Inhibited by the product CTP, via allosteric rather than competitive inhibition. Functionally, catalyzes the ATP-dependent amination of UTP to CTP with either L-glutamine or ammonia as the source of nitrogen. Regulates intracellular CTP levels through interactions with the four ribonucleotide triphosphates. The chain is CTP synthase from Blochmanniella floridana.